A 683-amino-acid chain; its full sequence is ATP-dependent zinc metalloprotease FtsH (683 aa).

The segment at 1–43 (MEDKNIKDDEILDDQNDNQEDVQNQDEEKEIKPKKPKKKVYIS) is disordered. The Cytoplasmic segment spans residues 1–70 (MEDKNIKDDE…KNNNISFRVK (70 aa)). Positions 10–28 (EILDDQNDNQEDVQNQDEE) are enriched in acidic residues. Residues 71 to 91 (PPIFFFLILILMSTLFYFYGN) traverse the membrane as a helical segment. The Periplasmic portion of the chain corresponds to 92 to 174 (KTALFQEKRE…IVVLGTPVSS (83 aa)). A helical transmembrane segment spans residues 175-195 (IITRAIFSFAPLFMLLFFFYF). Over 196 to 683 (INKKMMGSSG…LDDEQLEKYY (488 aa)) the chain is Cytoplasmic. Residue 270-277 (GEPGTGKT) coordinates ATP. His-494 contributes to the Zn(2+) binding site. Glu-495 is an active-site residue. Zn(2+) contacts are provided by His-498 and Asp-569.

The protein in the central section; belongs to the AAA ATPase family. This sequence in the C-terminal section; belongs to the peptidase M41 family. As to quaternary structure, homohexamer. Zn(2+) is required as a cofactor.

The protein resides in the cell inner membrane. In terms of biological role, acts as a processive, ATP-dependent zinc metallopeptidase for both cytoplasmic and membrane proteins. Plays a role in the quality control of integral membrane proteins. The sequence is that of ATP-dependent zinc metalloprotease FtsH from Streptobacillus moniliformis (strain ATCC 14647 / DSM 12112 / NCTC 10651 / 9901).